Here is a 304-residue protein sequence, read N- to C-terminus: Oxygen-dependent coproporphyrinogen-III oxidase (304 aa).

S95 is a binding site for substrate. A divalent metal cation is bound by residues H99 and H109. Residue H109 is the Proton donor of the active site. 111–113 (NVR) is a binding site for substrate. A divalent metal cation-binding residues include H148 and H178. Residues 243-278 (YVEFNLVYDRGTLFGLQSGGRTESILMSLPPLVRWR) form an important for dimerization region. Residue 261 to 263 (GGR) coordinates substrate.

Belongs to the aerobic coproporphyrinogen-III oxidase family. In terms of assembly, homodimer. Requires a divalent metal cation as cofactor.

It localises to the cytoplasm. The catalysed reaction is coproporphyrinogen III + O2 + 2 H(+) = protoporphyrinogen IX + 2 CO2 + 2 H2O. It functions in the pathway porphyrin-containing compound metabolism; protoporphyrin-IX biosynthesis; protoporphyrinogen-IX from coproporphyrinogen-III (O2 route): step 1/1. Involved in the heme biosynthesis. Catalyzes the aerobic oxidative decarboxylation of propionate groups of rings A and B of coproporphyrinogen-III to yield the vinyl groups in protoporphyrinogen-IX. This is Oxygen-dependent coproporphyrinogen-III oxidase from Thioalkalivibrio sulfidiphilus (strain HL-EbGR7).